The primary structure comprises 83 residues: Cytochrome b559 subunit alpha (83 aa).

The helical transmembrane segment at 21–35 threads the bilayer; it reads VIHSITIPSLFIAGW. Heme is bound at residue H23.

It belongs to the PsbE/PsbF family. In terms of assembly, heterodimer of an alpha subunit and a beta subunit. PSII is composed of 1 copy each of membrane proteins PsbA, PsbB, PsbC, PsbD, PsbE, PsbF, PsbH, PsbI, PsbJ, PsbK, PsbL, PsbM, PsbT, PsbX, PsbY, PsbZ, Psb30/Ycf12, at least 3 peripheral proteins of the oxygen-evolving complex and a large number of cofactors. It forms dimeric complexes. Heme b serves as cofactor.

It localises to the plastid. It is found in the chloroplast thylakoid membrane. Its function is as follows. This b-type cytochrome is tightly associated with the reaction center of photosystem II (PSII). PSII is a light-driven water:plastoquinone oxidoreductase that uses light energy to abstract electrons from H(2)O, generating O(2) and a proton gradient subsequently used for ATP formation. It consists of a core antenna complex that captures photons, and an electron transfer chain that converts photonic excitation into a charge separation. This chain is Cytochrome b559 subunit alpha, found in Chara vulgaris (Common stonewort).